Consider the following 506-residue polypeptide: Histidine ammonia-lyase (506 aa).

Residues 143–145 constitute a cross-link (5-imidazolinone (Ala-Gly)); sequence ASG. 2,3-didehydroalanine (Ser) is present on serine 144.

Belongs to the PAL/histidase family. Post-translationally, contains an active site 4-methylidene-imidazol-5-one (MIO), which is formed autocatalytically by cyclization and dehydration of residues Ala-Ser-Gly.

The protein localises to the cytoplasm. It carries out the reaction L-histidine = trans-urocanate + NH4(+). It participates in amino-acid degradation; L-histidine degradation into L-glutamate; N-formimidoyl-L-glutamate from L-histidine: step 1/3. The polypeptide is Histidine ammonia-lyase (Salmonella gallinarum (strain 287/91 / NCTC 13346)).